We begin with the raw amino-acid sequence, 428 residues long: Adenylosuccinate synthetase (428 aa).

Residues 12–18 (GDEGKGK) and 40–42 (GHT) each bind GTP. The Proton acceptor role is filled by Asp13. Residues Asp13 and Gly40 each coordinate Mg(2+). IMP contacts are provided by residues 13 to 16 (DEGK), 38 to 41 (NAGH), Thr130, Arg144, Gln224, Thr239, and Arg303. The active-site Proton donor is His41. A substrate-binding site is contributed by 299–305 (VTTGRSR). GTP-binding positions include Arg305, 331–333 (KID), and 413–415 (GVG).

Belongs to the adenylosuccinate synthetase family. As to quaternary structure, homodimer. The cofactor is Mg(2+).

Its subcellular location is the cytoplasm. It carries out the reaction IMP + L-aspartate + GTP = N(6)-(1,2-dicarboxyethyl)-AMP + GDP + phosphate + 2 H(+). It participates in purine metabolism; AMP biosynthesis via de novo pathway; AMP from IMP: step 1/2. Its function is as follows. Plays an important role in the de novo pathway of purine nucleotide biosynthesis. Catalyzes the first committed step in the biosynthesis of AMP from IMP. The protein is Adenylosuccinate synthetase of Clostridium perfringens (strain 13 / Type A).